A 70-amino-acid polypeptide reads, in one-letter code: MDVNTKDGKGRIPIHYATYSKQHEITQILILLQPGSEIDTVDNYGGTPFFYLLLKHESGQNKTLLDFFLR.

An ANK repeat occupies 9 to 43 (KGRIPIHYATYSKQHEITQILILLQPGSEIDTVDN).

The chain is Putative ankyrin repeat protein RC0502 from Rickettsia conorii (strain ATCC VR-613 / Malish 7).